The sequence spans 327 residues: Delta(3,5)-Delta(2,4)-dienoyl-CoA isomerase, mitochondrial (327 aa).

The N-terminal 33 residues, 1–33 (MATAMTVSSKLLGLLMQQLRGTRQLYFNVSLRS), are a transit peptide targeting the mitochondrion. Substrate contacts are provided by residues 115–119 (SGIDL) and G173. An N6-succinyllysine modification is found at K230. Phosphoserine is present on S267. Residue K316 is modified to N6-succinyllysine. The short motif at 325–327 (SKL) is the Microbody targeting signal element. K326 carries the post-translational modification N6-acetyllysine.

This sequence belongs to the enoyl-CoA hydratase/isomerase family. As to quaternary structure, homohexamer. Expressed in heart and liver (at protein level).

It localises to the mitochondrion. Its subcellular location is the peroxisome. It carries out the reaction (3E,5Z)-octadienoyl-CoA = (2E,4E)-octadienoyl-CoA. It catalyses the reaction (3E,5Z,8Z,11Z,14Z)-eicosapentaenoyl-CoA = (2E,4E,8Z,11Z,14Z)-eicosapentaenoyl-CoA. It participates in lipid metabolism; fatty acid beta-oxidation. Isomerization of 3-trans,5-cis-dienoyl-CoA to 2-trans,4-trans-dienoyl-CoA. The chain is Delta(3,5)-Delta(2,4)-dienoyl-CoA isomerase, mitochondrial from Rattus norvegicus (Rat).